A 367-amino-acid chain; its full sequence is Glutamate 5-kinase (367 aa).

An ATP-binding site is contributed by K17. Residues S57, D144, and N156 each contribute to the substrate site. ATP-binding positions include 176–177 and 217–223; these read SD and TGGMVSK. The PUA domain maps to 279-357; sequence VGSLTLDEGA…SELPCELRRP (79 aa).

This sequence belongs to the glutamate 5-kinase family.

It is found in the cytoplasm. It carries out the reaction L-glutamate + ATP = L-glutamyl 5-phosphate + ADP. It functions in the pathway amino-acid biosynthesis; L-proline biosynthesis; L-glutamate 5-semialdehyde from L-glutamate: step 1/2. In terms of biological role, catalyzes the transfer of a phosphate group to glutamate to form L-glutamate 5-phosphate. In Mycobacterium leprae (strain Br4923), this protein is Glutamate 5-kinase.